The chain runs to 228 residues: Thermonuclease (228 aa).

The signal sequence occupies residues 1–23; sequence MTEYLLSAGICMAIVSILLIGMA. A propeptide spanning residues 24–60 is cleaved from the precursor; sequence ISNVSKEQYAKRFFFFATSCLVLTLVVASSLSSSANA. Asp100 provides a ligand contact to Ca(2+). The active site involves Arg114. Residues Asp119 and Thr120 each contribute to the Ca(2+) site. Residues Glu122 and Arg166 contribute to the active site.

Belongs to the thermonuclease family. Ca(2+) serves as cofactor.

It is found in the secreted. It carries out the reaction Endonucleolytic cleavage to nucleoside 3'-phosphates and 3'-phosphooligonucleotide end-products.. Its function is as follows. Enzyme that catalyzes the hydrolysis of both DNA and RNA at the 5' position of the phosphodiester bond. This is Thermonuclease (nuc) from Staphylococcus aureus (strain MRSA252).